The chain runs to 405 residues: Terpene cyclase pbrA (405 aa).

Mg(2+) is bound by residues D103, E168, N229, S233, E237, and D241. The short motif at 103 to 108 (DDEISS) is the D(D/E)XX(D/E) motif element. The short motif at 227 to 237 (LVNDLFSFYKE) is the NSE motif element. The WxxxxxRY motif signature appears at 316 to 323 (EDLGGSSA).

Belongs to the trichodiene synthase family. Mg(2+) is required as a cofactor.

The protein operates within secondary metabolite biosynthesis; terpenoid biosynthesis. In terms of biological role, terpene cyclase; part of the gene cluster that mediates the biosynthesis of the sesquiterpenoid aspterric acid (AA), an inhibitor of dihydroxy-acid dehydratase (DHAD) effective as an herbicide. PbrA cyclizes farnesyl diphosphate (FPP) to produce (-)-daucane. The cytochrome P450 monooxygenase pbrBB then converts (-)-daucane into the alpha-epoxy carboxylate intermediate which is further converted into the tricyclic aspterric acid by the cytochrome P450 monooxygenase pbrC. The sequence is that of Terpene cyclase pbrA from Penicillium brasilianum.